The chain runs to 219 residues: uncharacterized protein (219 aa).

Residue aspartate 58 is part of the active site.

Belongs to the pseudouridine synthase RluA family.

It carries out the reaction a uridine in RNA = a pseudouridine in RNA. This is an uncharacterized protein from Zymomonas mobilis subsp. mobilis (strain ATCC 31821 / ZM4 / CP4).